The chain runs to 244 residues: 2,5-diamino-6-ribosylamino-4(3H)-pyrimidinone 5'-phosphate reductase (244 aa).

NADP(+) contacts are provided by residues threonine 74, aspartate 78, isoleucine 160, and 183 to 187 (GSHVI).

It belongs to the HTP reductase family. Homodimer.

It catalyses the reaction 2,5-diamino-6-(1-D-ribitylamino)pyrimidin-4(3H)-one 5'-phosphate + NADP(+) = 2,5-diamino-6-(1-D-ribosylamino)pyrimidin-4(3H)-one 5'-phosphate + NADPH + H(+). The enzyme catalyses 2,5-diamino-6-(1-D-ribitylamino)pyrimidin-4(3H)-one 5'-phosphate + NAD(+) = 2,5-diamino-6-(1-D-ribosylamino)pyrimidin-4(3H)-one 5'-phosphate + NADH + H(+). The protein operates within cofactor biosynthesis; riboflavin biosynthesis. Functionally, catalyzes an early step in riboflavin biosynthesis, the NADPH-dependent reduction of the ribose side chain of 2,5-diamino-6-ribosylamino-4(3H)-pyrimidinone 5'-phosphate, yielding 2,5-diamino-6-ribitylamino-4(3H)-pyrimidinone 5'-phosphate. This Candida glabrata (strain ATCC 2001 / BCRC 20586 / JCM 3761 / NBRC 0622 / NRRL Y-65 / CBS 138) (Yeast) protein is 2,5-diamino-6-ribosylamino-4(3H)-pyrimidinone 5'-phosphate reductase (RIB7).